The following is a 2102-amino-acid chain: Probable serine/threonine-protein kinase DDB_G0272282 (2102 aa).

One can recognise a PX domain in the interval 1–118 (MKYQLSILGD…NWLVPQNEPA (118 aa)). Residues 124–222 (NPDKSGYLIK…WIKAIELSQQ (99 aa)) form the PH domain. Residues 225 to 240 (QDQEQYRKQEEEERQK) are compositionally biased toward basic and acidic residues. Disordered stretches follow at residues 225 to 289 (QDQE…SDGS), 302 to 390 (GPNN…SDLN), 426 to 558 (EQPG…SASP), 574 to 665 (SNLP…PLPN), 685 to 768 (NNNS…NNSL), 804 to 842 (KKKEKDKEKEKDKEKEKEKEIGGNISTSTTPNKKNGTLR), 1029 to 1051 (QQQQQKQNETTGTTTGTAGSSVN), 1106 to 1224 (GTPT…PQPQ), and 1476 to 1514 (SSKVDSSSSSQISSPILSSPPPPMKQPPPQVIVPPSSLT). 2 stretches are compositionally biased toward low complexity: residues 256 to 281 (STLTSASAPTSPVQSSSSTSNMLPSS) and 304 to 327 (NNSNNNNNNNNNSYYYSHSSNNHN). Residues 328–348 (HYNHHNNNHNNSHHHHHHHNG) show a composition bias toward basic residues. Composition is skewed to low complexity over residues 353 to 376 (SSQVSLSVNTTSSNSSGSSSSTSL) and 426 to 437 (EQPGSYQQPQHQ). The span at 438 to 450 (QGGGGGGGGGGGN) shows a compositional bias: gly residues. Positions 466–484 (SNLSSRSNSNSSGSSSGSG) are enriched in low complexity. Gly residues predominate over residues 485–501 (SSSGSGPIGSGGVGGGL). Composition is skewed to low complexity over residues 535–558 (SNSSSSISSSSSSSSASSASSASP) and 587–626 (NANNNNNNNNNNNNNNNNNNNNDFNLNNNNNNNNNNNNGN). The span at 627–659 (TASGSSCNTTPNLLPAPTNVSPIQNRARSSPMT) shows a compositional bias: polar residues. Residues 804-824 (KKKEKDKEKEKDKEKEKEKEI) are compositionally biased toward basic and acidic residues. Residues 827–841 (NISTSTTPNKKNGTL) show a composition bias toward polar residues. Over residues 1106–1118 (GTPTTTSGDNTPL) the composition is skewed to polar residues. Low complexity-rich tracts occupy residues 1119–1182 (TNTA…NSSI), 1196–1221 (EQQQEQQQQQHQEQPLQPQQQQQQQP), and 1476–1492 (SSKVDSSSSSQISSPIL). Residues 1493–1507 (SSPPPPMKQPPPQVI) are compositionally biased toward pro residues. The region spanning 1527–1851 (FEIIKPISRG…AYEVKTHPFF (325 aa)) is the Protein kinase domain. Residues 1533–1541 (ISRGAFGRV) and K1556 each bind ATP. D1650 serves as the catalytic Proton acceptor. Low complexity-rich tracts occupy residues 1687–1729 (NTNT…SQTN), 1902–1999 (SQPQ…NINN), and 2006–2052 (NNNS…QINN). Disordered stretches follow at residues 1687 to 1741 (NTNT…KNTL) and 1902 to 2070 (SQPQ…SKIE). In terms of domain architecture, AGC-kinase C-terminal spans 1852–1911 (ANVNWDTLIDQEMDNIFLPKPENNYDTDYFWDRQSMYDDEAEDDFLTINQSQPQHQSQHQ).

This sequence belongs to the protein kinase superfamily. AGC Ser/Thr protein kinase family.

It catalyses the reaction L-seryl-[protein] + ATP = O-phospho-L-seryl-[protein] + ADP + H(+). The enzyme catalyses L-threonyl-[protein] + ATP = O-phospho-L-threonyl-[protein] + ADP + H(+). The protein is Probable serine/threonine-protein kinase DDB_G0272282 of Dictyostelium discoideum (Social amoeba).